A 346-amino-acid chain; its full sequence is Dihydroorotase (346 aa).

Residues His17 and His19 each contribute to the Zn(2+) site. Residues 19–21 (HVR) and Asn45 contribute to the substrate site. Residues Lys102, His139, and His177 each coordinate Zn(2+). At Lys102 the chain carries N6-carboxylysine. Residue His139 coordinates substrate. Residue Leu222 participates in substrate binding. Asp250 is a binding site for Zn(2+). Residue Asp250 is part of the active site. His254 and Ala266 together coordinate substrate.

The protein belongs to the metallo-dependent hydrolases superfamily. DHOase family. Class II DHOase subfamily. In terms of assembly, homodimer. Zn(2+) is required as a cofactor.

It catalyses the reaction (S)-dihydroorotate + H2O = N-carbamoyl-L-aspartate + H(+). It functions in the pathway pyrimidine metabolism; UMP biosynthesis via de novo pathway; (S)-dihydroorotate from bicarbonate: step 3/3. Functionally, catalyzes the reversible cyclization of carbamoyl aspartate to dihydroorotate. This chain is Dihydroorotase, found in Delftia acidovorans (strain DSM 14801 / SPH-1).